We begin with the raw amino-acid sequence, 458 residues long: Tyrosine phenol-lyase (458 aa).

Lys258 is modified (N6-(pyridoxal phosphate)lysine).

The protein belongs to the beta-eliminating lyase family. In terms of assembly, homotetramer. Requires pyridoxal 5'-phosphate as cofactor.

It carries out the reaction L-tyrosine + H2O = phenol + pyruvate + NH4(+). The sequence is that of Tyrosine phenol-lyase (tpl) from Symbiobacterium thermophilum (strain DSM 24528 / JCM 14929 / IAM 14863 / T).